The chain runs to 427 residues: MAEGEDVGWWRSWLQQSYQAVKEKSTEALEFMKRDLTEFTQVVQHDTACTIAATASVVKEKLATEGSSGATEKVKKGLSDFLGVISDTFAPSPDKTIDCDVITLMGTPSGTAEPYDGTKARLYSLQSDPATYCNEPDGPPELFDAWLSEFCLEEKKGEISELLVGSPSIRALYTKMVPAAVSHSEFWHRYFYKVHQLEQEQARRDALKQRADQSISEEPGWEEEEEELEGIVPSPKEAKIPKETKTTTSPEDEPAPQSPCEETPVEPPAEATPSESSESISLVTQVANPAAAPEAPELPKDLSQKLFEASLEEQSLAEDEGETGPPPPPPSKPLTPAGRASGPEPRPPARVETLREEVPTDLRVFELNSDSGKSTPSNNGKKGSSTDISEDWEKDFDLDMTEEEVQMALSKVDASGELEDVEWEDWE.

A phosphoserine mark is found at serine 92 and serine 166. One can recognise a BSD domain in the interval 146–198; it reads WLSEFCLEEKKGEISELLVGSPSIRALYTKMVPAAVSHSEFWHRYFYKVHQLE. A disordered region spans residues 208–397; the sequence is KQRADQSISE…ISEDWEKDFD (190 aa). Positions 219–229 are enriched in acidic residues; the sequence is PGWEEEEEELE. Over residues 236–245 the composition is skewed to basic and acidic residues; that stretch reads KEAKIPKETK. The segment covering 268–279 has biased composition (low complexity); that stretch reads PAEATPSESSES. Over residues 324 to 333 the composition is skewed to pro residues; sequence GPPPPPPSKP. Over residues 347 to 364 the composition is skewed to basic and acidic residues; it reads PPARVETLREEVPTDLRV. Threonine 353 is modified (phosphothreonine). Residues 368–387 are compositionally biased toward polar residues; the sequence is NSDSGKSTPSNNGKKGSSTD. Residues serine 384 and serine 385 each carry the phosphoserine modification. Residues 388 to 397 show a composition bias toward acidic residues; that stretch reads ISEDWEKDFD. Residue serine 415 is modified to Phosphoserine.

This chain is BSD domain-containing protein 1 (Bsdc1), found in Mus musculus (Mouse).